The primary structure comprises 144 residues: Large ribosomal subunit protein uL15 (144 aa).

A disordered region spans residues 1-52 (MRLNTLSPAEGAKHAPKRVGRGIGSGLGKTAGRGHKGQNSRSGGGVRRGFEG). Over residues 21–31 (RGIGSGLGKTA) the composition is skewed to gly residues.

It belongs to the universal ribosomal protein uL15 family. As to quaternary structure, part of the 50S ribosomal subunit.

In terms of biological role, binds to the 23S rRNA. The sequence is that of Large ribosomal subunit protein uL15 from Yersinia enterocolitica serotype O:8 / biotype 1B (strain NCTC 13174 / 8081).